The primary structure comprises 352 residues: MASSLLLALLFLTPTTVVNPKTEGPCPACWGAIFDLESQRELLLDLAKKSILDKLHLSQRPILSRPVSRGALKTALQRLRGPRRETLLEHDQRQEEYEIISFADTDLSSINQTRLEFHFSGRMASGMEVRQTRFMFFVQFPHNATQTMNIRVLVLRPYDTNLTLTSQYVVQVNASGWYQLLLGPEAQAACSQGHLTLELVPESQVAHSSLILGWFSHRPFVAAQVRVEGKHRVRRRGIDCQGASRMCCRQEFFVDFREIGWNDWIIQPEGYAMNFCTGQCPLHVAGMPGISASFHTAVLNLLKANAAAGTTGRGSCCVPTSRRPLSLLYYDRDSNIVKTDIPDMVVEACGCS.

Residues 1–18 (MASSLLLALLFLTPTTVV) form the signal peptide. The propeptide occupies 19–236 (NPKTEGPCPA…VEGKHRVRRR (218 aa)). N111, N143, N161, and N173 each carry an N-linked (GlcNAc...) asparagine glycan. 4 disulfide bridges follow: C240–C248, C247–C317, C276–C349, and C280–C351.

This sequence belongs to the TGF-beta family. As to quaternary structure, homodimeric or heterodimeric through association with alpha and beta subunits, linked by one or more disulfide bonds. Inhibins are heterodimers of one alpha and one beta subunit. Activins are homo- or heterodimers of beta subunits only. In terms of tissue distribution, mainly expressed in the adult liver.

Its subcellular location is the secreted. In terms of biological role, inhibins and activins inhibit and activate, respectively, the secretion of follitropin by the pituitary gland. Inhibins/activins are involved in regulating a number of diverse functions such as hypothalamic and pituitary hormone secretion, gonadal hormone secretion, germ cell development and maturation, erythroid differentiation, insulin secretion, nerve cell survival, embryonic axial development or bone growth, depending on their subunit composition. Inhibins appear to oppose the functions of activins. The polypeptide is Inhibin beta C chain (Inhbc) (Mus musculus (Mouse)).